A 292-amino-acid polypeptide reads, in one-letter code: Acetylglutamate kinase (292 aa).

Substrate is bound by residues 60–61 (GG), Arg82, and Asn187.

It belongs to the acetylglutamate kinase family. ArgB subfamily.

It is found in the cytoplasm. The enzyme catalyses N-acetyl-L-glutamate + ATP = N-acetyl-L-glutamyl 5-phosphate + ADP. It participates in amino-acid biosynthesis; L-arginine biosynthesis; N(2)-acetyl-L-ornithine from L-glutamate: step 2/4. In terms of biological role, catalyzes the ATP-dependent phosphorylation of N-acetyl-L-glutamate. In Methanobrevibacter smithii (strain ATCC 35061 / DSM 861 / OCM 144 / PS), this protein is Acetylglutamate kinase.